A 477-amino-acid chain; its full sequence is UDP-N-acetylmuramate--L-alanine ligase (477 aa).

Residue 112 to 118 (GAHGKTT) participates in ATP binding.

It belongs to the MurCDEF family.

Its subcellular location is the cytoplasm. It catalyses the reaction UDP-N-acetyl-alpha-D-muramate + L-alanine + ATP = UDP-N-acetyl-alpha-D-muramoyl-L-alanine + ADP + phosphate + H(+). It functions in the pathway cell wall biogenesis; peptidoglycan biosynthesis. In terms of biological role, cell wall formation. The sequence is that of UDP-N-acetylmuramate--L-alanine ligase from Delftia acidovorans (strain DSM 14801 / SPH-1).